We begin with the raw amino-acid sequence, 953 residues long: Lysosomal alpha-glucosidase (953 aa).

Residues 1 to 27 (MNIRKPLCSNSVVGACTLISLTTAVIL) form the signal peptide. The propeptide occupies 28-69 (GHLMLRELMLLPQDLHESSSGLWKTYRPHHQEGYKPGPLHIQ). In terms of domain architecture, P-type spans 80–131 (TQCDVPPSSRFDCAPDKGISQEQCEARGCCYVPAGQVLKEPQIGQPWCFFPP). 3 disulfides stabilise this stretch: cysteine 82/cysteine 109, cysteine 92/cysteine 108, and cysteine 103/cysteine 127. Asparagine 140, asparagine 233, and asparagine 390 each carry an N-linked (GlcNAc...) asparagine glycan. Aspartate 404 serves as a coordination point for substrate. A glycan (N-linked (GlcNAc...) asparagine) is linked at asparagine 470. Aspartate 518 (nucleophile) is an active-site residue. Residue glutamate 521 is part of the active site. A disulfide bridge links cysteine 533 with cysteine 558. Substrate is bound by residues arginine 600 and aspartate 616. Residues cysteine 647 and cysteine 658 are joined by a disulfide bond. Residue histidine 674 coordinates substrate. 3 N-linked (GlcNAc...) asparagine glycosylation sites follow: asparagine 883, asparagine 926, and asparagine 933.

This sequence belongs to the glycosyl hydrolase 31 family.

The protein resides in the lysosome. It localises to the lysosome membrane. It catalyses the reaction Hydrolysis of terminal, non-reducing (1-&gt;4)-linked alpha-D-glucose residues with release of alpha-D-glucose.. Essential for the degradation of glycogen in lysosomes. Has highest activity on alpha-1,4-linked glycosidic linkages, but can also hydrolyze alpha-1,6-linked glucans. This chain is Lysosomal alpha-glucosidase (Gaa), found in Mus musculus (Mouse).